A 215-amino-acid polypeptide reads, in one-letter code: MGVRAQQKEKTRRSLVEAAFSQLSAERSFASLSLREVAREAVIAPTSFYRHFRDVDELGLTMVDESGLMLRQLMRQARQRIAKGGSVIRTSVSTFMEFIGNNPNAFRLLLRERSGTSAAFRAAVAREIQHFIAELADYLELENHMPRAFTEAQAEAMVTIVFSAGAEALDVGVEQRRQLEERLVLQLRMISKGAYYWYRREQEKTAIIPGNVKDE.

In terms of domain architecture, HTH tetR-type spans K10 to L70. A DNA-binding region (H-T-H motif) is located at residues S33–F52.

As to quaternary structure, homodimer.

The protein localises to the cytoplasm. In terms of biological role, represses the transcription of fabB, involved in unsaturated fatty acid (UFA) biosynthesis. By controlling UFA production, FabR directly influences the physical properties of the membrane bilayer. In Escherichia coli (strain K12 / MC4100 / BW2952), this protein is HTH-type transcriptional repressor FabR.